The following is a 691-amino-acid chain: MAQDDKGKKLRRSCVESFVGLSDELKAQLYQCVLLINDAYETIYDPSDLNRVVEDVCIRIMKECSKLGALCGLFTDINMFNLFCFFRASRMRTKGAAGYNVPCAEASQGIIRILTERILFCTEKAFLTAACSGVSLPPAICKLLHEIYTEMKAKCLGAWRRLVCNRRPIMILTSSLLKLYNTYDTAGLLSEQSRALCLLVFQPVYLPRIMAPLEIMTKGQLAPENFYSITGSAEKRRPITTGKVTGLSYPGSGLMPESLILPILEPGLLPASMVDLSDVLAKPAVILSAPALSQFVISKPHPNMPHTVSIIPFNPSGTDPAFISTWQAASQNMVYNTSTAPLKPATGSSQTVSVKAVAQGAVITATTVPQAMPARGTGGELPVMSASTPARDQVAACFVAENTGDSPDNPSSFLTSCHPCDPNTVIVAQQFQPPQCVTLLQVTCAPSSTPPPDSTVRAPVVQLPTVVPLPASAFLPALAQPEASGEELPGGHDGDQGVPCRDSTAAATAAEATTPKRKQRSKERSSKKRKALTVPEADTTPSTTTPGTSLGSITTPQDVHATDVATSEGPSEAQPPLLSLPPPLDVDQSLFALLDEAGPETWDVGSPLSPTDDALLSSILQGLYQLDTPPPLRSPSPASFGPESPADIPSPSGGEYTQLQPVRATSATPANEVQESGTLYQLHQWRNYFRD.

T366 and T367 each carry an O-linked (GlcNAc) threonine; by host glycan. 2 disordered regions span residues 482–582 (EASG…SLPP) and 626–677 (LDTP…QESG). The span at 504–513 (TAAATAAEAT) shows a compositional bias: low complexity. Residues 515–531 (PKRKQRSKERSSKKRKA) show a composition bias toward basic residues. Over residues 539-556 (TTPSTTTPGTSLGSITTP) the composition is skewed to low complexity. Positions 655–677 (EYTQLQPVRATSATPANEVQESG) are enriched in polar residues.

Belongs to the herpesviridae TAF50 family. As to quaternary structure, homotetramer. Interacts with KTA/ORF57. Interacts with host PARP1; this interaction negatively regulates RTA/ORF50 transactivation activity. Interacts with host SMC5 and SMC6; these interactions remove the repressive chromatin structure to allow viral reactivation. Interacts with host POU2F1; this interaction enhances RTA/ORF50-mediated transactivation of several viral promoters including K-bZIP promoter.

It localises to the host nucleus. It catalyses the reaction S-ubiquitinyl-[E2 ubiquitin-conjugating enzyme]-L-cysteine + [acceptor protein]-L-lysine = [E2 ubiquitin-conjugating enzyme]-L-cysteine + N(6)-ubiquitinyl-[acceptor protein]-L-lysine.. Transcriptional transactivator that is necessary and sufficient for reactivation of the virus from latency. Acts post-transcriptionally and transcriptionally to regulate viral lytic gene expression and synergistically with ORF57 activates certain early and late viral promoters including its own promoter. Autostimulation on its promoter is mediated by the formation of a ternary complex between ORF50 and the cellular components HGMB1 and POU2F1. Also possesses a bimodal activity in targeting proteins for degradation through using its own E3 ligase activity or by stabilizing and chaperoning host E3 ligases. These activities help to subvert the host innate and adaptive immune responses while also modulating the host transcriptome and protein landscape to promote virus production. For instance, targets the host SMC5/6 complex for ubiquitination and subsequent degradation through the ubiquitin-proteasome during reactivation while during latency, host SMC5/6 complex binds to the viral episome and condenses viral chromatin, creating a repressive chromatin structure to silence genome transcription. Hijacks the cellular E3 ligase complex RNF20/40 to increase the level of transcriptionally active RNA polymerase II on viral gene promoters thereby facilitating lytic gene expression. Acts as a SUMO-targeting ubiquitin ligase and affects general sumoylation of cellular proteins. Promotes the polyubiquitination and subsequent degradation of host MYD88 and thereby inhibits MYD88-mediated TLR4 signaling. Induces the degradation of vFLIP/ORF71 together with cellular ubiquitin ligase ITCH to prevent vFLIP-induced NF-kappa-B signaling. This is Replication and transcription activator (ORF50) from Homo sapiens (Human).